A 175-amino-acid polypeptide reads, in one-letter code: NADH-ubiquinone oxidoreductase chain 6 (175 aa).

The next 5 helical transmembrane spans lie at 1–21 (MMTYIVFILSIIFVISFVGFS), 25–45 (SPIYGGLVLIISGAVGCGIVL), 47–67 (FGGSFLGLMVFLIYLGGMLVV), 88–108 (AVLGAFVMGLLSELLLACYIL), and 149–169 (YGTWLVIVTGWSLFIGVLVIM).

It belongs to the complex I subunit 6 family. In terms of assembly, core subunit of respiratory chain NADH dehydrogenase (Complex I) which is composed of 45 different subunits.

It localises to the mitochondrion inner membrane. It carries out the reaction a ubiquinone + NADH + 5 H(+)(in) = a ubiquinol + NAD(+) + 4 H(+)(out). Functionally, core subunit of the mitochondrial membrane respiratory chain NADH dehydrogenase (Complex I) which catalyzes electron transfer from NADH through the respiratory chain, using ubiquinone as an electron acceptor. Essential for the catalytic activity and assembly of complex I. This chain is NADH-ubiquinone oxidoreductase chain 6 (MT-ND6), found in Halichoerus grypus (Gray seal).